The following is a 122-amino-acid chain: Basic phospholipase A2 LmTX-I (122 aa).

Cystine bridges form between cysteine 26/cysteine 115, cysteine 28/cysteine 44, cysteine 43/cysteine 95, cysteine 49/cysteine 122, cysteine 50/cysteine 88, and cysteine 75/cysteine 86. Ca(2+) is bound by residues tyrosine 27, glycine 29, and glycine 31. Histidine 47 is an active-site residue. Ca(2+) is bound at residue aspartate 48. Aspartate 89 is an active-site residue.

In terms of assembly, monomer. Ca(2+) serves as cofactor. In terms of tissue distribution, expressed by the venom gland.

Its subcellular location is the secreted. It catalyses the reaction a 1,2-diacyl-sn-glycero-3-phosphocholine + H2O = a 1-acyl-sn-glycero-3-phosphocholine + a fatty acid + H(+). Its activity is regulated as follows. Inhibited by Mn(2+), Mg(2+), Zn(2+) and Cu(2+). Its function is as follows. Snake venom phospholipase A2 (PLA2) that displays neurotoxic and myotoxic activities. Induces inflammatory edema by mechanisms involving mast cell activation and arachidonic acid metabolites. Increases plasma creatine kinase activity. PLA2 catalyzes the calcium-dependent hydrolysis of the 2-acyl groups in 3-sn-phosphoglycerides. This chain is Basic phospholipase A2 LmTX-I, found in Lachesis muta muta (Bushmaster).